Reading from the N-terminus, the 120-residue chain is Large ribosomal subunit protein bL20 (120 aa).

Belongs to the bacterial ribosomal protein bL20 family.

Binds directly to 23S ribosomal RNA and is necessary for the in vitro assembly process of the 50S ribosomal subunit. It is not involved in the protein synthesizing functions of that subunit. In Methylobacillus flagellatus (strain ATCC 51484 / DSM 6875 / VKM B-1610 / KT), this protein is Large ribosomal subunit protein bL20.